Reading from the N-terminus, the 574-residue chain is Phosphoenolpyruvate-protein phosphotransferase (574 aa).

His-190 acts as the Tele-phosphohistidine intermediate in catalysis. Phosphoenolpyruvate-binding residues include Arg-297 and Arg-333. Positions 432 and 456 each coordinate Mg(2+). Phosphoenolpyruvate-binding positions include 455 to 456 (ND) and Arg-466. The Proton donor role is filled by Cys-503.

Belongs to the PEP-utilizing enzyme family. As to quaternary structure, homodimer. Mg(2+) serves as cofactor.

Its subcellular location is the cytoplasm. It carries out the reaction L-histidyl-[protein] + phosphoenolpyruvate = N(pros)-phospho-L-histidyl-[protein] + pyruvate. Its function is as follows. General (non sugar-specific) component of the phosphoenolpyruvate-dependent sugar phosphotransferase system (sugar PTS). This major carbohydrate active-transport system catalyzes the phosphorylation of incoming sugar substrates concomitantly with their translocation across the cell membrane. Enzyme I transfers the phosphoryl group from phosphoenolpyruvate (PEP) to the phosphoryl carrier protein (HPr). This chain is Phosphoenolpyruvate-protein phosphotransferase (ptsI), found in Latilactobacillus sakei (Lactobacillus sakei).